The chain runs to 730 residues: MGDVLAHESELLGLVKEYLDFAEFEDTLKTFSKECKVKGKPLCKTVGGSLKKDSNSLMIQKDLVAAFDSGDQKLFFDLWEGHIPSSIRDTDSLAQKLEFYLHIHFAIYLLKYSGGRPDRQELDERISYFKTYLETKGASLSQTTEFLPFYALPFVPNPMVHPSFKELFQDSWTPELKLKLEKFLALIFKASNTPKLLTIYKENGSNNKEMLQQLHQQLLEAERRAMAYLKRYNKMQADYHSLIGVTAELVDSLEATVSGKMITPEYLQSVCVRLFSNQMRQSLAHSVDFTRPGTASTMLRASLAPEKLKDVPLLPSLDYEKLKKDLIWGSDRLKAFLLQALRWRLTTSHPGEQRETVLQAYISNDLLDCHSHNQRSVLQLLHSKSEAVRQYMARLVNALASLAEGRLYLAQNTKVLRMLEGRLKEEDKDVITRENVLGALQKFSLRRPLQTAMIRDGLIFWLIDLLKEPDCLSDYTLEYSVALLMNLCLRSAGKNMCAKVAGLMLKVLSDLLGHENHEIQPYVNGALYSILSIPSIREEARAMGMEDILRCFIKEGNAEMIRQIEFIIKQLNSEDLLDGVLESDDDEDEDDEEDHDIMEADLDKDELIQPQLGELSGEKLLTTEYLGIMTNTGKARRKGLASVQWSGDEPLRRPVTPGGHRTGCPVVGDHLISSQNAQQARNGCPRPIPVAQPDDYKEGKRGVAGRATPSSCKSAECAEPVLSSGAQKPK.

Positions His7–Gly39 constitute a LisH domain. A coiled-coil region spans residues Ser205–Leu242. A Phosphoserine modification is found at Ser583. A disordered region spans residues Gln675–Lys730.

As to quaternary structure, interacts with TOGARAM1, CCDC66, CEP104, CSPP1 and CEP290. Interacts with NDUFAF2.

It localises to the cytoplasm. Its subcellular location is the cytoskeleton. It is found in the cilium basal body. The protein resides in the cell projection. The protein localises to the cilium. It localises to the microtubule organizing center. Its subcellular location is the centrosome. It is found in the centriole. Involved in ciliogenesis. It is required for appropriate acetylation and polyglutamylation of ciliary microtubules, and regulation of cilium length. Acts as a positive regulator of hedgehog (Hh)signaling. May participate in the trafficking and/or retention of GLI2 and GLI3 proteins at the ciliary tip. The polypeptide is LisH domain-containing protein ARMC9 (Armc9) (Rattus norvegicus (Rat)).